A 680-amino-acid chain; its full sequence is WD repeat-containing protein 48 homolog (680 aa).

8 WD repeats span residues 26-65 (QHRN…SEKY), 71-110 (HHND…CMST), 113-152 (THRD…ALTA), 164-203 (GSKD…RSMK), 206-245 (GHTE…CVQT), 248-287 (VHKE…NKTL), 290-329 (EEKA…RGTL), and 350-389 (KGGA…KKDT). Residues 594-618 (TPSGANANNSLQNSQSDGNSEGSQL) are disordered. The segment covering 596–609 (SGANANNSLQNSQS) has biased composition (low complexity).

It belongs to the WD repeat WDR48 family. As to quaternary structure, catalytic component of the Usp12-46 deubiquitylase complex consisting of Usp12-46, Wdr20 and Uaf1; regulatory subunit that, together wtih Wdr20, stabilizes Usp12-46. The Usp12-46 deubiquitylase complex associates with arr/arrow; the interaction leads to deubiquitination and stabilization of arr/arrow.

Its function is as follows. Regulatory component of the Usp12-46 deubiquitylase complex. activates deubiquitination by increasing the catalytic turnover without increasing the affinity of deubiquitinating enzymes for the substrate. The complex deubiquitylates the wg/wingless-signaling receptor arr/arrow, which stabilizes the receptor and increases its concentration at the cell surface; this enhances the sensitivity of cells to wg/wingless-signal stimulation. This increases the amplitude and spatial range of the signaling response to the wg/wingless morphogen gradient, facilitating the precise concentration-dependent regulation of its target genes. Together with Wdr20 and Usp12-46 required for wg/wingless-mediated signaling in the wing imaginal disc and for wg/wingless-dependent regulation of intestinal stem cell proliferation. The chain is WD repeat-containing protein 48 homolog from Drosophila persimilis (Fruit fly).